The primary structure comprises 438 residues: Na(+)/H(+) antiporter NhaA (438 aa).

11 helical membrane-spanning segments follow: residues 23–43, 62–82, 104–124, 133–153, 162–182, 185–205, 221–241, 302–322, 337–357, 372–392, and 410–430; these read FGGIFLFLNAVLAMVVANSFL, FFIGFSLHNWIDDVLMALFFL, SFPVIAALGGMIAPGLIYFFL, GFGIPMATDIAFALGVIMLLG, VFLITLAVADDLGAIIVIALF, TNLKFAWLLGALGVVLLLALL, VLLWFCVHQSGIHATIAAVVL, FLAPISGYFIMPLFAFANAGV, FGVILGLCLGKPLGIFLITFI, WWHILGAGLLAGIGFTMSMFI, and IAILLGSLISGIIGALYLFAL.

The protein belongs to the NhaA Na(+)/H(+) (TC 2.A.33) antiporter family.

It is found in the cell inner membrane. It carries out the reaction Na(+)(in) + 2 H(+)(out) = Na(+)(out) + 2 H(+)(in). Functionally, na(+)/H(+) antiporter that extrudes sodium in exchange for external protons. The chain is Na(+)/H(+) antiporter NhaA from Helicobacter pylori (strain P12).